A 483-amino-acid chain; its full sequence is Dual specificity protein phosphatase 10 (483 aa).

Positions 169-286 (PSQGPVIIDC…FKQNHGNLCD (118 aa)) constitute a Rhodanese domain. The interval 200–216 (KISRRRLQQGKITVLDL) is interaction with MAP kinases. Residues 322–465 (ELTPILPFLF…LLEFEEDLNN (144 aa)) form the Tyrosine-protein phosphatase domain. Residue Cys-409 is the Phosphocysteine intermediate of the active site.

It belongs to the protein-tyrosine phosphatase family. Non-receptor class dual specificity subfamily. Monomer. Interacts with MAPK14.

The protein localises to the cytoplasm. Its subcellular location is the nucleus. It carries out the reaction O-phospho-L-tyrosyl-[protein] + H2O = L-tyrosyl-[protein] + phosphate. It catalyses the reaction O-phospho-L-seryl-[protein] + H2O = L-seryl-[protein] + phosphate. The enzyme catalyses O-phospho-L-threonyl-[protein] + H2O = L-threonyl-[protein] + phosphate. Functionally, protein phosphatase involved in the inactivation of MAP kinases. Has a specificity for the MAPK11/MAPK12/MAPK13/MAPK14 subfamily. It preferably dephosphorylates p38. This Mus musculus (Mouse) protein is Dual specificity protein phosphatase 10 (Dusp10).